The sequence spans 468 residues: Glutamyl-tRNA reductase (468 aa).

Substrate contacts are provided by residues 49–52 (TCNR), serine 109, 114–116 (EQQ), and glutamine 120. Catalysis depends on cysteine 50, which acts as the Nucleophile. 189-194 (GAGAMG) is an NADP(+) binding site. The tract at residues 443-468 (VPSGFDAESRRGGGDMQSSPKRSPSN) is disordered. Over residues 458–468 (MQSSPKRSPSN) the composition is skewed to polar residues.

Belongs to the glutamyl-tRNA reductase family. In terms of assembly, homodimer.

The catalysed reaction is (S)-4-amino-5-oxopentanoate + tRNA(Glu) + NADP(+) = L-glutamyl-tRNA(Glu) + NADPH + H(+). Its pathway is porphyrin-containing compound metabolism; protoporphyrin-IX biosynthesis; 5-aminolevulinate from L-glutamyl-tRNA(Glu): step 1/2. In terms of biological role, catalyzes the NADPH-dependent reduction of glutamyl-tRNA(Glu) to glutamate 1-semialdehyde (GSA). The sequence is that of Glutamyl-tRNA reductase from Mycobacterium tuberculosis (strain ATCC 25177 / H37Ra).